The sequence spans 1297 residues: Phosphoribosylformylglycinamidine synthase (1297 aa).

ATP contacts are provided by residues 307 to 318 and Ala678; that span reads GASTGSGGEIRD. Glu718, Asn722, and Asp886 together coordinate Mg(2+). The Glutamine amidotransferase type-1 domain occupies 1044–1297; it reads MAILREQGVN…MFQNARKNLG (254 aa). Catalysis depends on Cys1137, which acts as the Nucleophile. Active-site residues include His1262 and Glu1264.

The protein in the N-terminal section; belongs to the FGAMS family. As to quaternary structure, monomer.

It localises to the cytoplasm. It catalyses the reaction N(2)-formyl-N(1)-(5-phospho-beta-D-ribosyl)glycinamide + L-glutamine + ATP + H2O = 2-formamido-N(1)-(5-O-phospho-beta-D-ribosyl)acetamidine + L-glutamate + ADP + phosphate + H(+). It participates in purine metabolism; IMP biosynthesis via de novo pathway; 5-amino-1-(5-phospho-D-ribosyl)imidazole from N(2)-formyl-N(1)-(5-phospho-D-ribosyl)glycinamide: step 1/2. Functionally, phosphoribosylformylglycinamidine synthase involved in the purines biosynthetic pathway. Catalyzes the ATP-dependent conversion of formylglycinamide ribonucleotide (FGAR) and glutamine to yield formylglycinamidine ribonucleotide (FGAM) and glutamate. This is Phosphoribosylformylglycinamidine synthase from Vibrio vulnificus (strain CMCP6).